Reading from the N-terminus, the 508-residue chain is Chromosomal replication initiator protein DnaA (508 aa).

Residues 1–91 form a domain I, interacts with DnaA modulators region; the sequence is MADDPGSSFT…TDALSRRLGQ (91 aa). Positions 91-167 are domain II; sequence QQIQLGVRIA…AIDPAVAAGT (77 aa). The disordered stretch occupies residues 104-152; the sequence is DDVEDALIPSAEPFPDTDADLSARRRTDSRASGERGAVTNTQPGWTNYF. A compositionally biased stretch (basic and acidic residues) spans 124–136; it reads LSARRRTDSRASG. Residues 141–152 show a composition bias toward polar residues; sequence VTNTQPGWTNYF. A domain III, AAA+ region region spans residues 168–384; it reads SLNRRYTFDT…GALIRVTAFA (217 aa). Residues Gly212, Gly214, Lys215, and Thr216 each contribute to the ATP site. Positions 385–508 are domain IV, binds dsDNA; it reads SLNKTPIDKS…TTRIRQRSKR (124 aa).

It belongs to the DnaA family. In terms of assembly, oligomerizes as a right-handed, spiral filament on DNA at oriC.

Its subcellular location is the cytoplasm. In terms of biological role, plays an essential role in the initiation and regulation of chromosomal replication. ATP-DnaA binds to the origin of replication (oriC) to initiate formation of the DNA replication initiation complex once per cell cycle. Binds the DnaA box (a 9 base pair repeat at the origin) and separates the double-stranded (ds)DNA. Forms a right-handed helical filament on oriC DNA; dsDNA binds to the exterior of the filament while single-stranded (ss)DNA is stabiized in the filament's interior. The ATP-DnaA-oriC complex binds and stabilizes one strand of the AT-rich DNA unwinding element (DUE), permitting loading of DNA polymerase. After initiation quickly degrades to an ADP-DnaA complex that is not apt for DNA replication. Binds acidic phospholipids. The sequence is that of Chromosomal replication initiator protein DnaA from Mycobacterium avium.